The primary structure comprises 279 residues: 2-dehydropantoate 2-reductase (279 aa).

NADP(+) contacts are provided by residues 6 to 11 (GLGAVG), K66, and N86. Residue K158 is the Proton donor of the active site. Residues K158, N162, N166, N176, and 225–228 (NLSS) contribute to the substrate site. E240 contacts NADP(+).

The protein belongs to the ketopantoate reductase family.

It is found in the cytoplasm. The catalysed reaction is (R)-pantoate + NAD(+) = 2-dehydropantoate + NADH + H(+). It carries out the reaction (R)-pantoate + NADP(+) = 2-dehydropantoate + NADPH + H(+). It participates in cofactor biosynthesis; coenzyme A biosynthesis. In terms of biological role, catalyzes the NAD(P)H-dependent reduction of ketopantoate into pantoic acid. This chain is 2-dehydropantoate 2-reductase, found in Pyrobaculum aerophilum (strain ATCC 51768 / DSM 7523 / JCM 9630 / CIP 104966 / NBRC 100827 / IM2).